Consider the following 1399-residue polypeptide: DNA-directed RNA polymerase subunit beta' (1399 aa).

Positions 71, 73, 86, and 89 each coordinate Zn(2+). Positions 462, 464, and 466 each coordinate Mg(2+). Residues cysteine 810, cysteine 884, cysteine 891, and cysteine 894 each coordinate Zn(2+). Positions 1376 to 1399 are disordered; it reads EREKQAAITPAAPEAEPLALPPAE.

The protein belongs to the RNA polymerase beta' chain family. As to quaternary structure, the RNAP catalytic core consists of 2 alpha, 1 beta, 1 beta' and 1 omega subunit. When a sigma factor is associated with the core the holoenzyme is formed, which can initiate transcription. It depends on Mg(2+) as a cofactor. Zn(2+) is required as a cofactor.

The enzyme catalyses RNA(n) + a ribonucleoside 5'-triphosphate = RNA(n+1) + diphosphate. In terms of biological role, DNA-dependent RNA polymerase catalyzes the transcription of DNA into RNA using the four ribonucleoside triphosphates as substrates. The protein is DNA-directed RNA polymerase subunit beta' of Afipia carboxidovorans (strain ATCC 49405 / DSM 1227 / KCTC 32145 / OM5) (Oligotropha carboxidovorans).